Consider the following 323-residue polypeptide: tRNA dimethylallyltransferase (323 aa).

12–19 (GPTAAGKT) is a binding site for ATP. Residue 14–19 (TAAGKT) participates in substrate binding. 2 interaction with substrate tRNA regions span residues 37–40 (DSAL) and 161–165 (QRLTR).

Belongs to the IPP transferase family. In terms of assembly, monomer. It depends on Mg(2+) as a cofactor.

The catalysed reaction is adenosine(37) in tRNA + dimethylallyl diphosphate = N(6)-dimethylallyladenosine(37) in tRNA + diphosphate. Functionally, catalyzes the transfer of a dimethylallyl group onto the adenine at position 37 in tRNAs that read codons beginning with uridine, leading to the formation of N6-(dimethylallyl)adenosine (i(6)A). This chain is tRNA dimethylallyltransferase, found in Pseudomonas fluorescens (strain ATCC BAA-477 / NRRL B-23932 / Pf-5).